The primary structure comprises 816 residues: Microbial collagenase (816 aa).

The signal sequence occupies residues M1–A27. A Zn(2+)-binding site is contributed by H435. The active site involves E436. H439 is a binding site for Zn(2+).

This sequence belongs to the peptidase M9A family. Zn(2+) serves as cofactor.

Its subcellular location is the secreted. It catalyses the reaction Digestion of native collagen in the triple helical region at Xaa-|-Gly bonds. With synthetic peptides, a preference is shown for Gly at P3 and P1', Pro and Ala at P2 and P2', and hydroxyproline, Ala or Arg at P3'.. Functionally, possesses gelatinolytic activity. Can cause weak haemolysis on blood agar. The sequence is that of Microbial collagenase (prt) from Vibrio parahaemolyticus serotype O3:K6 (strain RIMD 2210633).